A 467-amino-acid polypeptide reads, in one-letter code: ATP synthase subunit beta (467 aa).

150-157 (GGAGVGKT) contacts ATP.

The protein belongs to the ATPase alpha/beta chains family. F-type ATPases have 2 components, CF(1) - the catalytic core - and CF(0) - the membrane proton channel. CF(1) has five subunits: alpha(3), beta(3), gamma(1), delta(1), epsilon(1). CF(0) has three main subunits: a(1), b(2) and c(9-12). The alpha and beta chains form an alternating ring which encloses part of the gamma chain. CF(1) is attached to CF(0) by a central stalk formed by the gamma and epsilon chains, while a peripheral stalk is formed by the delta and b chains.

It is found in the cell inner membrane. The catalysed reaction is ATP + H2O + 4 H(+)(in) = ADP + phosphate + 5 H(+)(out). Its function is as follows. Produces ATP from ADP in the presence of a proton gradient across the membrane. The catalytic sites are hosted primarily by the beta subunits. The polypeptide is ATP synthase subunit beta (Aliivibrio fischeri (strain ATCC 700601 / ES114) (Vibrio fischeri)).